We begin with the raw amino-acid sequence, 1602 residues long: Mediator of RNA polymerase II transcription subunit 26 (1602 aa).

The TFIIS N-terminal domain maps to 8–85 (QLTSHLSQAL…KMWREMVGIQ (78 aa)). Disordered stretches follow at residues 86–108 (QTANDSQHHHSQPTSLPTPPSAH), 238–298 (VTDS…AQNE), 399–481 (EDSI…KGVD), 580–617 (FSNKNEDAGNTDSDTITSEPSQDSNKSQEIKECTSLDS), and 694–736 (SDNG…MDTP). Residues 273–285 (RPKKFKKDKKHKE) show a composition bias toward basic residues. Positions 401–414 (SITNDSSTSCSRLS) are enriched in polar residues. Residues 418–431 (VEERRKSDKIDDSI) show a composition bias toward basic and acidic residues. A compositionally biased stretch (basic residues) spans 467–477 (VPKKRGRKKGS). Positions 587 to 604 (AGNTDSDTITSEPSQDSN) are enriched in polar residues. Residues 715–728 (KQEEQLPKLERLSD) show a composition bias toward basic and acidic residues. Residues 792–820 (LDVASVNADTVQNQINSHNQEGETSEEQN) adopt a coiled-coil conformation. 2 disordered regions span residues 1035 to 1158 (FEET…EVEN) and 1372 to 1407 (NTSAERTVSEDPLKIEEDPYLTSSSNDVTDSDNESD). The span at 1056–1070 (SSSSNSSCSNSSNSS) shows a compositional bias: low complexity. The span at 1073 to 1083 (KTQDSINEKLR) shows a compositional bias: basic and acidic residues. A compositionally biased stretch (basic residues) spans 1101 to 1112 (RKRRGKNRKKRN). Low complexity predominate over residues 1124–1143 (ISLNGTISNLSSSNNSSSSE). Residues 1144–1158 (SETETGLENENEVEN) show a composition bias toward acidic residues. A compositionally biased stretch (basic and acidic residues) spans 1378–1388 (TVSEDPLKIEE).

It belongs to the Mediator complex subunit 26 family. As to quaternary structure, component of the Mediator complex.

The protein localises to the nucleus. In terms of biological role, component of the Mediator complex, a coactivator involved in the regulated transcription of nearly all RNA polymerase II-dependent genes. Mediator functions as a bridge to convey information from gene-specific regulatory proteins to the basal RNA polymerase II transcription machinery. Mediator is recruited to promoters by direct interactions with regulatory proteins and serves as a scaffold for the assembly of a functional preinitiation complex with RNA polymerase II and the general transcription factors. The chain is Mediator of RNA polymerase II transcription subunit 26 (MED26) from Drosophila pseudoobscura pseudoobscura (Fruit fly).